The chain runs to 133 residues: Fluoride-specific ion channel FluC (133 aa).

The next 4 helical transmembrane spans lie at 12–32, 41–61, 76–96, and 104–124; these read LAMT…ASLI, WGTL…LVWL, IVGV…CLVF, and MIGI…VAGA. Residues G81 and T84 each coordinate Na(+).

The protein belongs to the fluoride channel Fluc/FEX (TC 1.A.43) family.

The protein localises to the cell inner membrane. The catalysed reaction is fluoride(in) = fluoride(out). Its activity is regulated as follows. Na(+) is not transported, but it plays an essential structural role and its presence is essential for fluoride channel function. Fluoride-specific ion channel. Important for reducing fluoride concentration in the cell, thus reducing its toxicity. The chain is Fluoride-specific ion channel FluC from Xanthomonas euvesicatoria pv. vesicatoria (strain 85-10) (Xanthomonas campestris pv. vesicatoria).